A 227-amino-acid chain; its full sequence is NAD(P)H-quinone oxidoreductase subunit K, chloroplastic (227 aa).

Cys-43, Cys-44, Cys-108, and Cys-139 together coordinate [4Fe-4S] cluster.

This sequence belongs to the complex I 20 kDa subunit family. NDH is composed of at least 16 different subunits, 5 of which are encoded in the nucleus. Requires [4Fe-4S] cluster as cofactor.

Its subcellular location is the plastid. The protein resides in the chloroplast thylakoid membrane. It catalyses the reaction a plastoquinone + NADH + (n+1) H(+)(in) = a plastoquinol + NAD(+) + n H(+)(out). The catalysed reaction is a plastoquinone + NADPH + (n+1) H(+)(in) = a plastoquinol + NADP(+) + n H(+)(out). Its function is as follows. NDH shuttles electrons from NAD(P)H:plastoquinone, via FMN and iron-sulfur (Fe-S) centers, to quinones in the photosynthetic chain and possibly in a chloroplast respiratory chain. The immediate electron acceptor for the enzyme in this species is believed to be plastoquinone. Couples the redox reaction to proton translocation, and thus conserves the redox energy in a proton gradient. In Citrus sinensis (Sweet orange), this protein is NAD(P)H-quinone oxidoreductase subunit K, chloroplastic.